Here is a 359-residue protein sequence, read N- to C-terminus: 3-dehydroquinate synthase (359 aa).

NAD(+) contacts are provided by residues 71-76 (DGEAYK), 105-109 (GVIGD), 129-130 (TT), Lys-142, and Lys-151. The Zn(2+) site is built by Glu-184, His-247, and His-264.

This sequence belongs to the sugar phosphate cyclases superfamily. Dehydroquinate synthase family. Requires Co(2+) as cofactor. The cofactor is Zn(2+). NAD(+) serves as cofactor.

Its subcellular location is the cytoplasm. The catalysed reaction is 7-phospho-2-dehydro-3-deoxy-D-arabino-heptonate = 3-dehydroquinate + phosphate. It functions in the pathway metabolic intermediate biosynthesis; chorismate biosynthesis; chorismate from D-erythrose 4-phosphate and phosphoenolpyruvate: step 2/7. Catalyzes the conversion of 3-deoxy-D-arabino-heptulosonate 7-phosphate (DAHP) to dehydroquinate (DHQ). The chain is 3-dehydroquinate synthase from Burkholderia ambifaria (strain MC40-6).